Consider the following 517-residue polypeptide: Cytochrome P450 monooxygenase polD (517 aa).

The helical transmembrane segment at 5–27 threads the bilayer; that stretch reads VVLVGIVVLVLAYLSSTGKVYPH. Cys435 is a heme binding site.

The protein belongs to the cytochrome P450 family. Requires heme as cofactor.

The protein resides in the membrane. Functionally, cytochrome P450 monooxygenase; part of the gene cluster that mediates the biosynthesis of antifungal fernane-type triterpenoid polytolypin. PolD doe not seem to be involved in the biosynthesis of polytolypin. Within the pathway, the triterpene cyclase polA first catalyzes the cyclization of 2,3-oxidosqualene to motiol, polc converts the 4-alpha-methyl group of motiol to a carboxyl group, polB is responsible for appending a hydroxyl group at the 2-alpha position and polE is a dual functional P450, which can catalyze the formation of both the 1-beta-hydroxyl group and 10-beta-carboxyl group. This chain is Cytochrome P450 monooxygenase polD, found in Polytolypa hystricis (strain UAMH7299).